Reading from the N-terminus, the 455-residue chain is Glutamyl-tRNA reductase (455 aa).

Substrate-binding positions include 49-52 (TCNR), Ser109, 114-116 (ETQ), and Gln120. Cys50 acts as the Nucleophile in catalysis. 189–194 (GAGKMG) is a binding site for NADP(+).

The protein belongs to the glutamyl-tRNA reductase family. Homodimer.

It catalyses the reaction (S)-4-amino-5-oxopentanoate + tRNA(Glu) + NADP(+) = L-glutamyl-tRNA(Glu) + NADPH + H(+). It participates in porphyrin-containing compound metabolism; protoporphyrin-IX biosynthesis; 5-aminolevulinate from L-glutamyl-tRNA(Glu): step 1/2. Functionally, catalyzes the NADPH-dependent reduction of glutamyl-tRNA(Glu) to glutamate 1-semialdehyde (GSA). The chain is Glutamyl-tRNA reductase from Bacillus velezensis (strain DSM 23117 / BGSC 10A6 / LMG 26770 / FZB42) (Bacillus amyloliquefaciens subsp. plantarum).